Reading from the N-terminus, the 314-residue chain is uncharacterized protein (314 aa).

To M.leprae ML0607.

This is an uncharacterized protein from Mycobacterium bovis (strain ATCC BAA-935 / AF2122/97).